The sequence spans 70 residues: Large ribosomal subunit protein bL31 (70 aa).

It belongs to the bacterial ribosomal protein bL31 family. Type A subfamily. Part of the 50S ribosomal subunit.

In terms of biological role, binds the 23S rRNA. This Chlorobium chlorochromatii (strain CaD3) protein is Large ribosomal subunit protein bL31.